We begin with the raw amino-acid sequence, 604 residues long: Replication protein A 70 kDa DNA-binding subunit B (604 aa).

Positions 170–256 (WTIKVRVTNK…QNDYEMTLNE (87 aa)) form a DNA-binding region, OB. The C4-type zinc finger occupies 468–488 (CKTCNKKVTEAMDSGYWCESC).

Belongs to the replication factor A protein 1 family. In terms of assembly, heterotrimer of RPA1, RPA2 and RPA3 (canonical replication protein A complex).

Its subcellular location is the nucleus. Component of the replication protein A complex (RPA) required for DNA recombination, repair and replication. The activity of RPA is mediated by single-stranded DNA binding and protein interactions. Probably involved in repair of double-strand DNA breaks (DSBs) induced by genotoxic stresses. The protein is Replication protein A 70 kDa DNA-binding subunit B (RPA1B) of Arabidopsis thaliana (Mouse-ear cress).